A 647-amino-acid chain; its full sequence is Threonine--tRNA ligase (647 aa).

Residues 1 to 63 (MADISIKFPD…ASDGSIEIVT (63 aa)) enclose the TGS domain. The catalytic stretch occupies residues 242 to 540 (DHRVIGNQLD…LTEIYKGAFP (299 aa)). Zn(2+)-binding residues include C336, H387, and H517.

Belongs to the class-II aminoacyl-tRNA synthetase family. As to quaternary structure, homodimer. Zn(2+) serves as cofactor.

It is found in the cytoplasm. It catalyses the reaction tRNA(Thr) + L-threonine + ATP = L-threonyl-tRNA(Thr) + AMP + diphosphate + H(+). In terms of biological role, catalyzes the attachment of threonine to tRNA(Thr) in a two-step reaction: L-threonine is first activated by ATP to form Thr-AMP and then transferred to the acceptor end of tRNA(Thr). Also edits incorrectly charged L-seryl-tRNA(Thr). The polypeptide is Threonine--tRNA ligase (Levilactobacillus brevis (strain ATCC 367 / BCRC 12310 / CIP 105137 / JCM 1170 / LMG 11437 / NCIMB 947 / NCTC 947) (Lactobacillus brevis)).